Here is a 272-residue protein sequence, read N- to C-terminus: DNA repair protein RecO (272 aa).

Belongs to the RecO family.

In terms of biological role, involved in DNA repair and RecF pathway recombination. This is DNA repair protein RecO from Latilactobacillus sakei subsp. sakei (strain 23K) (Lactobacillus sakei subsp. sakei).